Consider the following 230-residue polypeptide: NAD(P)H-hydrate epimerase (230 aa).

Residues 11 to 218 enclose the YjeF N-terminal domain; the sequence is AIAVDQELFN…ALQRKYELNL (208 aa). 61-65 contacts (6S)-NADPHX; it reads NNGGD. Asn-62 and Asp-126 together coordinate K(+). (6S)-NADPHX contacts are provided by residues 130 to 136 and Asp-159; that span reads GFSFKPP. A K(+)-binding site is contributed by Ser-162.

It belongs to the NnrE/AIBP family. The cofactor is K(+).

It catalyses the reaction (6R)-NADHX = (6S)-NADHX. The enzyme catalyses (6R)-NADPHX = (6S)-NADPHX. Functionally, catalyzes the epimerization of the S- and R-forms of NAD(P)HX, a damaged form of NAD(P)H that is a result of enzymatic or heat-dependent hydration. This is a prerequisite for the S-specific NAD(P)H-hydrate dehydratase to allow the repair of both epimers of NAD(P)HX. The protein is NAD(P)H-hydrate epimerase of Drosophila sechellia (Fruit fly).